Here is a 95-residue protein sequence, read N- to C-terminus: Aspartyl/glutamyl-tRNA(Asn/Gln) amidotransferase subunit C (95 aa).

The protein belongs to the GatC family. In terms of assembly, heterotrimer of A, B and C subunits.

It carries out the reaction L-glutamyl-tRNA(Gln) + L-glutamine + ATP + H2O = L-glutaminyl-tRNA(Gln) + L-glutamate + ADP + phosphate + H(+). The enzyme catalyses L-aspartyl-tRNA(Asn) + L-glutamine + ATP + H2O = L-asparaginyl-tRNA(Asn) + L-glutamate + ADP + phosphate + 2 H(+). Functionally, allows the formation of correctly charged Asn-tRNA(Asn) or Gln-tRNA(Gln) through the transamidation of misacylated Asp-tRNA(Asn) or Glu-tRNA(Gln) in organisms which lack either or both of asparaginyl-tRNA or glutaminyl-tRNA synthetases. The reaction takes place in the presence of glutamine and ATP through an activated phospho-Asp-tRNA(Asn) or phospho-Glu-tRNA(Gln). This Syntrophotalea carbinolica (strain DSM 2380 / NBRC 103641 / GraBd1) (Pelobacter carbinolicus) protein is Aspartyl/glutamyl-tRNA(Asn/Gln) amidotransferase subunit C.